Reading from the N-terminus, the 174-residue chain is Variant surface antigen B (174 aa).

The N-terminal stretch at 1-29 (MKKSIFSKKLLVSFGSLVALASIPLIAIS) is a signal peptide. Cysteine 30 carries N-palmitoyl cysteine lipidation. Cysteine 30 carries S-diacylglycerol cysteine lipidation. The tract at residues 32 to 174 (QTNTDKSQQP…SQDSGNGSTK (143 aa)) is disordered. Residues 38 to 49 (SQQPGSGSSTSG) show a composition bias toward low complexity. A compositionally biased stretch (gly residues) spans 50–75 (GQSGTGLGSGTTTGGQSGTTTGGRSG). Positions 76-97 (SGSSSSTTGGQTGTGSDSQDSG) are enriched in low complexity. 7 repeat units span residues 88-99 (GTGSDSQDSGAK), 100-111 (GTGSDSQDSGAK), 112-123 (GTGSDSQDSGAK), 124-135 (GTGSDSQDSGAK), 136-147 (GTGSDSQDSGAK), 148-159 (GTGSDSQDSGAK), and 160-171 (GTGSDSQDSGNG). Residues 88–171 (GTGSDSQDSG…GSDSQDSGNG (84 aa)) are 7 X 12 AA tandem repeats. Residues 102–174 (GSDSQDSGAK…SQDSGNGSTK (73 aa)) show a composition bias toward polar residues.

The protein localises to the cell membrane. Responsible for the antigenic diversity for host adaptation. The polypeptide is Variant surface antigen B (vlpB) (Mesomycoplasma hyorhinis (Mycoplasma hyorhinis)).